The sequence spans 338 residues: MADSAQVPALVYLVTGGCGFLGEHIVRMLLEWEPRLRELRVFDLHLSSWLEELKTGPVQVTAIQGDVTQAHEVAAAMAGSHVVIHTAGLVDVFGKASPETIHKVNVQGTQNVIDACVQTGTRLLVYTSSMEVVGPNVKGHPFYRGNEDTPYEAIHRHPYPCSKALAEQLVLEANGRKGLRFGGRLFRAIPASVEHGRVYVGNVAWMHILVARELEQRAALMGGQVYFCYDKSPYKSYEDFNMEFLSPCGLRLIGTHPLLPYWLLVLLTALNALLQWLLRPLVLYTPLLNPYTLAVANTTFTVSTNKAQRHFGYKPLFSWEESRARTIHWVQAMEGSAW.

Catalysis depends on Tyr159, which acts as the Proton acceptor. Lys163 contacts NAD(+). The next 2 helical transmembrane spans lie at 258 to 278 (LLPY…QWLL) and 280 to 300 (PLVL…NTTF).

This sequence belongs to the 3-beta-HSD family. In terms of tissue distribution, high levels in liver and lung, moderate levels in spleen, brain, heart, kidney, jejunum and testis. Up-regulated in 3Y1 cells upon growth arrest.

The protein localises to the endoplasmic reticulum membrane. It carries out the reaction 7alpha-hydroxycholesterol + NAD(+) = 7alpha-hydroxycholest-4-en-3-one + NADH + H(+). The enzyme catalyses 7alpha,25-dihydroxycholesterol + NAD(+) = 7alpha,25-dihydroxy-4-cholesten-3-one + NADH + H(+). It catalyses the reaction (25R)-cholest-5-en-3beta,7alpha,26-triol + NAD(+) = (25R)-7alpha,26-dihydroxycholest-4-en-3-one + NADH + H(+). The catalysed reaction is (24S)-7alpha-dihydroxycholesterol + NAD(+) = (24S)-7alpha,24-dihydroxycholest-4-en-3-one + NADH + H(+). It functions in the pathway lipid metabolism; steroid biosynthesis. In terms of biological role, the 3-beta-HSD enzymatic system plays a crucial role in the biosynthesis of all classes of hormonal steroids. HSD VII is active against four 7-alpha-hydroxylated sterols. Does not metabolize several different C(19/21) steroids as substrates. Involved in bile acid synthesis. Plays a key role in cell positioning and movement in lymphoid tissues by mediating degradation of 7-alpha,25-dihydroxycholesterol (7-alpha,25-OHC): 7-alpha,25-OHC acts as a ligand for the G protein-coupled receptor GPR183/EBI2, a chemotactic receptor for a number of lymphoid cells. The polypeptide is 3 beta-hydroxysteroid dehydrogenase type 7 (Rattus norvegicus (Rat)).